Here is a 238-residue protein sequence, read N- to C-terminus: Large ribosomal subunit protein bL17m (238 aa).

This sequence belongs to the bacterial ribosomal protein bL17 family. As to quaternary structure, component of the mitochondrial large ribosomal subunit (mt-LSU). Mature yeast 74S mitochondrial ribosomes consist of a small (37S) and a large (54S) subunit. The 37S small subunit contains a 15S ribosomal RNA (15S mt-rRNA) and 34 different proteins. The 54S large subunit contains a 21S rRNA (21S mt-rRNA) and 46 different proteins.

It is found in the mitochondrion. Functionally, component of the mitochondrial ribosome (mitoribosome), a dedicated translation machinery responsible for the synthesis of mitochondrial genome-encoded proteins, including at least some of the essential transmembrane subunits of the mitochondrial respiratory chain. The mitoribosomes are attached to the mitochondrial inner membrane and translation products are cotranslationally integrated into the membrane. In Saccharomyces cerevisiae (strain ATCC 204508 / S288c) (Baker's yeast), this protein is Large ribosomal subunit protein bL17m (MRPL8).